A 63-amino-acid polypeptide reads, in one-letter code: Protein D-63 (63 aa).

In terms of assembly, homodimer.

Functionally, this protein may be involved in virus assembly. The sequence is that of Protein D-63 from Saccharolobus solfataricus (Sulfolobus solfataricus).